Here is a 75-residue protein sequence, read N- to C-terminus: Conotoxin Vc6.15 (75 aa).

Positions 1–19 (MEKLTILLHVAAVLMSTQA) are cleaved as a signal peptide. A propeptide spanning residues 20 to 41 (LIQEQRQKAKINLFSKRKPSAE) is cleaved from the precursor. 3 disulfide bridges follow: cysteine 49-cysteine 62, cysteine 55-cysteine 66, and cysteine 61-cysteine 71.

The protein belongs to the conotoxin O2 superfamily. Expressed by the venom duct.

It is found in the secreted. In terms of biological role, inhibits voltage-gated ion channels. This Conus victoriae (Queen Victoria cone) protein is Conotoxin Vc6.15.